Consider the following 594-residue polypeptide: Probable methylenetetrahydrofolate reductase (NADH) (594 aa).

The active-site Proton donor/acceptor is Glu-21. Residues 21 to 26 (EYFPPK) and 52 to 53 (TW) each bind NAD(+). FAD contacts are provided by residues 52 to 53 (TW), His-81, 111 to 113 (RGD), Tyr-153, 157 to 160 (HPDA), Asp-175, and Lys-182. Asp-113 provides a ligand contact to substrate. 2 residues coordinate substrate: Gln-193 and Tyr-285.

This sequence belongs to the methylenetetrahydrofolate reductase family. Homodimer. FAD serves as cofactor.

The enzyme catalyses (6S)-5-methyl-5,6,7,8-tetrahydrofolate + NAD(+) = (6R)-5,10-methylene-5,6,7,8-tetrahydrofolate + NADH + H(+). The protein operates within one-carbon metabolism; tetrahydrofolate interconversion. With respect to regulation, plant MTHFRs strongly prefer NADH over NADPH. Not inhibited by methionine or S-adenosylmethionine. Its function is as follows. The probable reversibility of the MTHFR reaction in plants suggests that they can metabolize the methyl group of 5,10-methylenetetrahydrofolate to serine, sugars and starch. The chain is Probable methylenetetrahydrofolate reductase (NADH) from Oryza sativa subsp. japonica (Rice).